The sequence spans 274 residues: Thiamine kinase (274 aa).

Belongs to the thiamine kinase family.

It carries out the reaction thiamine + ATP = thiamine phosphate + ADP + H(+). The protein operates within cofactor biosynthesis; thiamine diphosphate biosynthesis; thiamine phosphate from thiamine: step 1/1. Functionally, catalyzes the ATP-dependent phosphorylation of thiamine to thiamine phosphate. Is involved in thiamine salvage. In Escherichia coli O139:H28 (strain E24377A / ETEC), this protein is Thiamine kinase.